A 303-amino-acid polypeptide reads, in one-letter code: sn-1-specific diacylglycerol lipase ABHD11 (303 aa).

The N-terminal 22 residues, 1–22, are a transit peptide targeting the mitochondrion; the sequence is MLRWTRAWTAPYRGIGLSNSSF. Residues 55-290 enclose the AB hydrolase-1 domain; it reads PALVFLHGLF…NAGHWVHSDR (236 aa). K75 carries the post-translational modification N6-succinyllysine. Residues S129, D225, and H284 each act as charge relay system in the active site.

The protein belongs to the AB hydrolase superfamily. In terms of assembly, interacts with OGDH and DLST; this interaction maintains the functional lipoylation of the 2-oxoglutarate dehydrogenase complex. Phosphorylated.

It localises to the mitochondrion. It is found in the mitochondrion matrix. The catalysed reaction is a 1,3-diacyl-sn-glycerol + H2O = a 1-acyl-sn-glycerol + a fatty acid + H(+). It carries out the reaction 1-octadecanoyl-2-(9Z-octadecenoyl)-sn-glycerol + H2O = 2-(9Z-octadecenoyl)-glycerol + octadecanoate + H(+). The enzyme catalyses 1-octadecanoyl-2-(4Z,7Z,10Z,13Z,16Z,19Z-docosahexaenoyl)-sn-glycerol + H2O = 2-(4Z,7Z,10Z,13Z,16Z,19Z-docosahexaenoyl)-glycerol + octadecanoate + H(+). It catalyses the reaction a 1,2-diacyl-sn-glycerol + H2O = a 2-acylglycerol + a fatty acid + H(+). The catalysed reaction is 1,2-didecanoylglycerol + H2O = decanoylglycerol + decanoate + H(+). It carries out the reaction 1-octadecanoyl-2-(5Z,8Z,11Z,14Z-eicosatetraenoyl)-sn-glycerol + H2O = 2-(5Z,8Z,11Z,14Z-eicosatetraenoyl)-glycerol + octadecanoate + H(+). Its activity is regulated as follows. The diacylglycerol lipase activity can be modulated by phosphorylation by cAMP-dependent protein kinase. Its function is as follows. Catalyzes the hydrolysis of diacylglycerol in vitro and may function as a key regulator in lipid metabolism, namely by regulating the intracellular levels of diacylglycerol. 1,2-diacyl-sn-glycerols are the preferred substrate over 1,3-diacyl-sn-glycerols. The enzyme hydrolyzes stearate in preference to palmitate from the sn-1 position of 1,2-diacyl-sn-glycerols. Maintains the functional lipoylation of the 2-oxoglutarate dehydrogenase complex (OGDHc) through its interaction with the OGDHc by preventing the formation of lipoyl adducts. In addition, is also required for the expansion and differentiation of embryonic stem cells (ESCs). The chain is sn-1-specific diacylglycerol lipase ABHD11 from Bos taurus (Bovine).